Consider the following 128-residue polypeptide: Cytochrome c-type biogenesis protein CcmE (128 aa).

Over 1 to 8 the chain is Cytoplasmic; the sequence is MQKRVRNR. A helical; Signal-anchor for type II membrane protein membrane pass occupies residues 9-29; sequence LITIIICFCSAFLGISIILYN. Topologically, residues 30-128 are periplasmic; sequence LEKNIVFFLP…KHDENYRPPQ (99 aa). Residues histidine 120 and tyrosine 124 each contribute to the heme site.

This sequence belongs to the CcmE/CycJ family.

It is found in the cell inner membrane. Heme chaperone required for the biogenesis of c-type cytochromes. Transiently binds heme delivered by CcmC and transfers the heme to apo-cytochromes in a process facilitated by CcmF and CcmH. This Rickettsia rickettsii (strain Iowa) protein is Cytochrome c-type biogenesis protein CcmE.